A 638-amino-acid polypeptide reads, in one-letter code: Methylmalonyl-CoA mutase small subunit (638 aa).

Polar residues predominate over residues 1–11; sequence MSSTDQGTNPA. The tract at residues 1–34 is disordered; the sequence is MSSTDQGTNPADTDDLTPTTLSLAGDFPKATEEQ.

Belongs to the methylmalonyl-CoA mutase family. Heterodimer of an alpha and a beta chain. It depends on adenosylcob(III)alamin as a cofactor.

It catalyses the reaction (R)-methylmalonyl-CoA = succinyl-CoA. It participates in metabolic intermediate metabolism; propanoyl-CoA degradation; succinyl-CoA from propanoyl-CoA: step 3/3. Catalyzes the isomerization of succinyl-CoA to methylmalonyl-CoA during synthesis of propionate from tricarboxylic acid-cycle intermediates. The sequence is that of Methylmalonyl-CoA mutase small subunit (mutA) from Propionibacterium freudenreichii subsp. shermanii.